Reading from the N-terminus, the 315-residue chain is Methionyl-tRNA formyltransferase (315 aa).

115–118 (SLLP) provides a ligand contact to (6S)-5,6,7,8-tetrahydrofolate.

It belongs to the Fmt family.

The enzyme catalyses L-methionyl-tRNA(fMet) + (6R)-10-formyltetrahydrofolate = N-formyl-L-methionyl-tRNA(fMet) + (6S)-5,6,7,8-tetrahydrofolate + H(+). Its function is as follows. Attaches a formyl group to the free amino group of methionyl-tRNA(fMet). The formyl group appears to play a dual role in the initiator identity of N-formylmethionyl-tRNA by promoting its recognition by IF2 and preventing the misappropriation of this tRNA by the elongation apparatus. In Dehalococcoides mccartyi (strain ATCC BAA-2100 / JCM 16839 / KCTC 5957 / BAV1), this protein is Methionyl-tRNA formyltransferase.